The primary structure comprises 549 residues: Cytoplasmic trehalase (549 aa).

Residues Arg168, 175-176 (WD), Asn212, 221-223 (RSQ), 292-294 (RDE), and Gly324 contribute to the substrate site. Catalysis depends on proton donor/acceptor residues Asp326 and Glu509. Glu525 contributes to the substrate binding site.

The protein belongs to the glycosyl hydrolase 37 family. In terms of assembly, monomer.

It is found in the cytoplasm. The enzyme catalyses alpha,alpha-trehalose + H2O = alpha-D-glucose + beta-D-glucose. It functions in the pathway glycan degradation; trehalose degradation; D-glucose from alpha,alpha-trehalose: step 1/1. Hydrolyzes trehalose to glucose. Could be involved, in cells returning to low osmolarity conditions, in the utilization of the accumulated cytoplasmic trehalose, which was synthesized in response to high osmolarity. The protein is Cytoplasmic trehalase of Shigella boydii serotype 4 (strain Sb227).